The sequence spans 207 residues: Interleukin-6 (207 aa).

Positions 1–20 (MNSLSTSAFSLGLLLVMATA) are cleaved as a signal peptide. The cysteines at positions 67 and 73 are disulfide-linked. At serine 76 the chain carries Phosphoserine. A disulfide bridge links cysteine 96 with cysteine 106.

Belongs to the IL-6 superfamily. As to quaternary structure, component of a hexamer of two molecules each of IL6, IL6R and IL6ST; first binds to IL6R to associate with the signaling subunit IL6ST. Interacts with IL6R (via the N-terminal ectodomain); this interaction may be affected by IL6R-binding with SORL1, hence decreasing IL6 cis signaling. Interacts with SORL1 (via the N-terminal ectodomain); this interaction leads to IL6 internalization and lysosomal degradation. May form a trimeric complex with the soluble SORL1 ectodomain and soluble IL6R receptor; this interaction might stabilize circulating IL6, hence promoting IL6 trans signaling.

It localises to the secreted. Functionally, cytokine with a wide variety of biological functions in immunity, tissue regeneration, and metabolism. Binds to IL6R, then the complex associates to the signaling subunit IL6ST/gp130 to trigger the intracellular IL6-signaling pathway. The interaction with the membrane-bound IL6R and IL6ST stimulates 'classic signaling', whereas the binding of IL6 and soluble IL6R to IL6ST stimulates 'trans-signaling'. Alternatively, 'cluster signaling' occurs when membrane-bound IL6:IL6R complexes on transmitter cells activate IL6ST receptors on neighboring receiver cells. In terms of biological role, IL6 is a potent inducer of the acute phase response. Rapid production of IL6 contributes to host defense during infection and tissue injury, but excessive IL6 synthesis is involved in disease pathology. In the innate immune response, is synthesized by myeloid cells, such as macrophages and dendritic cells, upon recognition of pathogens through toll-like receptors (TLRs) at the site of infection or tissue injury. In the adaptive immune response, is required for the differentiation of B cells into immunoglobulin-secreting cells. Plays a major role in the differentiation of CD4(+) T cell subsets. Essential factor for the development of T follicular helper (Tfh) cells that are required for the induction of germinal-center formation. Required to drive naive CD4(+) T cells to the Th17 lineage. Also required for proliferation of myeloma cells and the survival of plasmablast cells. Acts as an essential factor in bone homeostasis and on vessels directly or indirectly by induction of VEGF, resulting in increased angiogenesis activity and vascular permeability. Induces, through 'trans-signaling' and synergistically with IL1B and TNF, the production of VEGF. Involved in metabolic controls, is discharged into the bloodstream after muscle contraction increasing lipolysis and improving insulin resistance. 'Trans-signaling' in central nervous system also regulates energy and glucose homeostasis. Mediates, through GLP-1, crosstalk between insulin-sensitive tissues, intestinal L cells and pancreatic islets to adapt to changes in insulin demand. Also acts as a myokine. Plays a protective role during liver injury, being required for maintenance of tissue regeneration. Also has a pivotal role in iron metabolism by regulating HAMP/hepcidin expression upon inflammation or bacterial infection. Through activation of IL6ST-YAP-NOTCH pathway, induces inflammation-induced epithelial regeneration. The chain is Interleukin-6 (IL6) from Canis lupus familiaris (Dog).